The sequence spans 621 residues: SH2B adapter protein 2 (621 aa).

Tyr-47 is subject to Phosphotyrosine. At Ser-130 the chain carries Phosphoserine. The tract at residues 143-166 is disordered; the sequence is RRSSPEPDGGATPKAAEPASEPRD. The region spanning 186 to 299 is the PH domain; the sequence is DIQREGALRF…WVADIQGCVD (114 aa). Residue Ser-303 is modified to Phosphoserine. One can recognise an SH2 domain in the interval 409-507; it reads WFHGTLSRVK…SADITLRSYV (99 aa). 2 disordered regions span residues 507 to 528 and 549 to 611; these read VRAQGPPPDPGPAPNTAAPVPA and PASP…LGRA. Residues 552–571 show a composition bias toward low complexity; it reads PSNGAGASSSSGSSSSATSL. Ser-597 bears the Phosphoserine mark. Tyr-618 carries the post-translational modification Phosphotyrosine.

This sequence belongs to the SH2B adapter family. Homodimer. Interacts with KIT/c-KIT, SHC1, EPOR, PDGFR, VAV1 and VAV3. Interacts (via N-terminal region) with SHC1. Interacts (via the phosphorylated C-terminus) with GRB2. Interacts (via its SH2 domain) with EPOR, INSR and KIT. Interacts with GRB2 after B-cell antigen receptor stimulation. Interacts (via PH domain) with VAV3. Interacts with NTRK1, NTRK2 and NTRK3 (phosphorylated); after stimulation of the receptor by its extracellular ligand and subsequent autophosphorylation of the receptor. Binds INSR, GRB2, ASB6 and CAP. Insulin stimulation leads to dissociation of CAP. Binds CBS only when SH2B2/APS has become phosphorylated. INSR binding does not depend on the phosphorylation of SH2B2/APS. Post-translationally, tyrosine phosphorylated by JAK2, KIT and other kinases activated by B-cell receptor in response to stimulation with cytokines, IL3, IL5, PDGF, IGF1, IGF2, CSF2/GM-CSF and cross-linking of the B-cell receptor complex. In terms of tissue distribution, strongly expressed in brain; also expressed in spleen, kidney and skeletal muscle, and at low levels in small intestine and bone marrow. Strongly expressed in B-cell lines, but not T-cell lines. Also expressed in myeloid and fibroblast cell lines.

The protein localises to the cytoplasm. It is found in the cell membrane. Its function is as follows. Adapter protein for several members of the tyrosine kinase receptor family. Involved in multiple signaling pathways. May be involved in coupling from immunoreceptor to Ras signaling. Acts as a negative regulator of cytokine signaling in collaboration with CBL. Binds to EPOR and suppresses EPO-induced STAT5 activation, possibly through a masking effect on STAT5 docking sites in EPOR. Suppresses PDGF-induced mitogenesis. May induce cytoskeletal reorganization via interaction with VAV3. The protein is SH2B adapter protein 2 (Sh2b2) of Mus musculus (Mouse).